Reading from the N-terminus, the 543-residue chain is Hydroxylamine reductase (543 aa).

[4Fe-4S] cluster contacts are provided by Cys3, Cys6, Cys15, and Cys21. 8 residues coordinate hybrid [4Fe-2O-2S] cluster: His244, Glu268, Cys312, Cys399, Cys427, Cys452, Glu486, and Lys488. Cys399 is modified (cysteine persulfide).

The protein belongs to the HCP family. Requires [4Fe-4S] cluster as cofactor. The cofactor is hybrid [4Fe-2O-2S] cluster.

It localises to the cytoplasm. It catalyses the reaction A + NH4(+) + H2O = hydroxylamine + AH2 + H(+). Functionally, catalyzes the reduction of hydroxylamine to form NH(3) and H(2)O. This Methanocella arvoryzae (strain DSM 22066 / NBRC 105507 / MRE50) protein is Hydroxylamine reductase.